The chain runs to 513 residues: ATP synthase subunit alpha (513 aa).

169 to 176 (GDRQTGKT) is an ATP binding site.

Belongs to the ATPase alpha/beta chains family. F-type ATPases have 2 components, CF(1) - the catalytic core - and CF(0) - the membrane proton channel. CF(1) has five subunits: alpha(3), beta(3), gamma(1), delta(1), epsilon(1). CF(0) has three main subunits: a(1), b(2) and c(9-12). The alpha and beta chains form an alternating ring which encloses part of the gamma chain. CF(1) is attached to CF(0) by a central stalk formed by the gamma and epsilon chains, while a peripheral stalk is formed by the delta and b chains.

Its subcellular location is the cell inner membrane. It catalyses the reaction ATP + H2O + 4 H(+)(in) = ADP + phosphate + 5 H(+)(out). Its function is as follows. Produces ATP from ADP in the presence of a proton gradient across the membrane. The alpha chain is a regulatory subunit. The sequence is that of ATP synthase subunit alpha from Shewanella baltica (strain OS223).